Consider the following 1293-residue polypeptide: Receptor-type tyrosine-protein phosphatase C (1293 aa).

The first 25 residues, 1–25 (MTMGLWLKLLAFGFALLDTEVFVTG), serve as a signal peptide directing secretion. Residues 26 to 566 (QTPTPSDELS…RNESTNFNAK (541 aa)) lie on the Extracellular side of the membrane. A disordered region spans residues 43-174 (LPQSDPLPAR…STTDISSGAS (132 aa)). 3 stretches are compositionally biased toward polar residues: residues 53–72 (TTESTPPSISERGNGSSETT), 88–110 (QPDSQTPSAGGADTQTFSSQADN), and 149–169 (LARNSSAASPTHTSNVSTTDI). Residue N66 is glycosylated (N-linked (GlcNAc...) asparagine). 15 N-linked (GlcNAc...) asparagine glycosylation sites follow: N152, N163, N209, N213, N220, N255, N260, N292, N313, N324, N349, N418, N429, N459, and N491. Fibronectin type-III domains lie at 376–472 (IPET…TKAD) and 473–568 (RPDK…AKAL). The helical transmembrane segment at 567–588 (ALIIFLVFLIIVTSIALLVVLY) threads the bilayer. Over 589 to 1293 (KIYDLRKKRS…SASPAPTQSS (705 aa)) the chain is Cytoplasmic. Tyrosine-protein phosphatase domains are found at residues 642-901 (FLAE…LVEY) and 933-1216 (LEAE…IASI). The residue at position 672 (Y672) is a Phosphotyrosine. Substrate is bound by residues D810, 842-848 (CSAGVGR), and Q886. The Phosphocysteine intermediate role is filled by C842. S964, S983, S986, S990, S993, S994, and S998 each carry phosphoserine. The segment at 980–1003 (LEMSKESEPESDESSDDDSDSEET) is disordered. A compositionally biased stretch (acidic residues) spans 988 to 1001 (PESDESSDDDSDSE). The Phosphocysteine intermediate role is filled by C1157. S1229 is modified (phosphoserine). The tract at residues 1240–1293 (DGGKQDANCVRPDGPLNKAQEDSRGVGTPEPTNSAEEPEHAANGSASPAPTQSS) is disordered. T1267 carries the post-translational modification Phosphothreonine. The span at 1283–1293 (GSASPAPTQSS) shows a compositional bias: polar residues. S1286 carries the post-translational modification Phosphoserine.

The protein belongs to the protein-tyrosine phosphatase family. Receptor class 1/6 subfamily. Interacts with SKAP1. Interacts with DPP4; the interaction is enhanced in an interleukin-12-dependent manner in activated lymphocytes. Binds GANAB and PRKCSH. Interacts with CD53; this interaction stabilizes PTPRC on the membrane and is required for optimal phosphatase activity. Interacts with CLEC10A. In terms of processing, heavily N- and O-glycosylated.

The protein resides in the cell membrane. Its subcellular location is the membrane raft. The protein localises to the synapse. The catalysed reaction is O-phospho-L-tyrosyl-[protein] + H2O = L-tyrosyl-[protein] + phosphate. Functionally, protein tyrosine-protein phosphatase required for T-cell activation through the antigen receptor. Acts as a positive regulator of T-cell coactivation upon binding to DPP4. The first PTPase domain has enzymatic activity, while the second one seems to affect the substrate specificity of the first one. Upon T-cell activation, recruits and dephosphorylates SKAP1 and FYN. Dephosphorylates LYN, and thereby modulates LYN activity. Interacts with CLEC10A at antigen presenting cell-T cell contact; CLEC10A on immature dendritic cells recognizes Tn antigen-carrying PTPRC/CD45 receptor on effector T cells and modulates T cell activation threshold to limit autoreactivity. This chain is Receptor-type tyrosine-protein phosphatase C, found in Mus musculus (Mouse).